The sequence spans 142 residues: Hemoglobin anodic subunit alpha (142 aa).

S1 is subject to N-acetylserine. The Globin domain maps to 1–142 (SLSTKDKAVV…LALALADRYR (142 aa)). H59 serves as a coordination point for O2. H88 provides a ligand contact to heme b.

The protein belongs to the globin family. As to quaternary structure, heterotetramer of two alpha chains and two beta chains. In terms of tissue distribution, red blood cells.

Its function is as follows. Involved in oxygen transport from gills to the various peripheral tissues. This chain is Hemoglobin anodic subunit alpha, found in Gymnothorax unicolor (Brown moray).